The following is a 603-amino-acid chain: NADPH-dependent diflavin oxidoreductase 1 (603 aa).

Residues 8–152 enclose the Flavodoxin-like domain; sequence VLVLYGSETG…SFVRWTGRLY (145 aa). FMN is bound by residues 14 to 19, 61 to 64, 99 to 108, and Glu-134; these read SETGNA, STTG, and LGDSTYLKFN. The region spanning 210-457 is the FAD-binding FR-type domain; that stretch reads PDGWTATLVG…RKPVLSPIHG (248 aa). Residues Arg-358, 388–391, and 429–432 each bind FAD; these read RDFS and GLCS. Residues Thr-472, 528–529, and 534–538 contribute to the NADP(+) site; these read SR and KIYVQ. Trp-603 is an FAD binding site.

This sequence belongs to the NADPH-dependent diflavin oxidoreductase NDOR1 family. It in the N-terminal section; belongs to the flavodoxin family. In the C-terminal section; belongs to the flavoprotein pyridine nucleotide cytochrome reductase family. Interacts with DRE2; as part of the cytosolic iron-sulfur (Fe-S) protein assembly (CIA) machinery. The cofactor is FAD. Requires FMN as cofactor.

The protein localises to the cytoplasm. Its subcellular location is the mitochondrion. The catalysed reaction is 2 oxidized [2Fe-2S]-[protein] + NADPH = 2 reduced [2Fe-2S]-[protein] + NADP(+) + H(+). In terms of biological role, NADPH-dependent reductase which is a central component of the cytosolic iron-sulfur (Fe-S) protein assembly (CIA) machinery. Transfers electrons from NADPH via its FAD and FMN prosthetic groups to the [2Fe-2S] cluster of DRE2, another key component of the CIA machinery. In turn, this reduced cluster provides electrons for assembly of cytosolic iron-sulfur cluster proteins. Positively controls H(2)O(2)-induced cell death. In Gibberella zeae (strain ATCC MYA-4620 / CBS 123657 / FGSC 9075 / NRRL 31084 / PH-1) (Wheat head blight fungus), this protein is NADPH-dependent diflavin oxidoreductase 1.